The sequence spans 358 residues: Alanine racemase (358 aa).

The Proton acceptor; specific for D-alanine role is filled by lysine 34. Lysine 34 is modified (N6-(pyridoxal phosphate)lysine). Position 130 (arginine 130) interacts with substrate. The active-site Proton acceptor; specific for L-alanine is tyrosine 254. Methionine 302 is a substrate binding site.

Belongs to the alanine racemase family. Pyridoxal 5'-phosphate is required as a cofactor.

The catalysed reaction is L-alanine = D-alanine. The protein operates within amino-acid biosynthesis; D-alanine biosynthesis; D-alanine from L-alanine: step 1/1. In terms of biological role, catalyzes the interconversion of L-alanine and D-alanine. May also act on other amino acids. This chain is Alanine racemase (alr), found in Actinobacillus succinogenes (strain ATCC 55618 / DSM 22257 / CCUG 43843 / 130Z).